A 370-amino-acid chain; its full sequence is UDP-N-acetylglucosamine--N-acetylmuramyl-(pentapeptide) pyrophosphoryl-undecaprenol N-acetylglucosamine transferase (370 aa).

UDP-N-acetyl-alpha-D-glucosamine contacts are provided by residues 10–12 (TGG), Asn126, Ser200, Ile255, and Gln300.

This sequence belongs to the glycosyltransferase 28 family. MurG subfamily.

Its subcellular location is the cell membrane. It catalyses the reaction Mur2Ac(oyl-L-Ala-gamma-D-Glu-L-Lys-D-Ala-D-Ala)-di-trans,octa-cis-undecaprenyl diphosphate + UDP-N-acetyl-alpha-D-glucosamine = beta-D-GlcNAc-(1-&gt;4)-Mur2Ac(oyl-L-Ala-gamma-D-Glu-L-Lys-D-Ala-D-Ala)-di-trans,octa-cis-undecaprenyl diphosphate + UDP + H(+). It participates in cell wall biogenesis; peptidoglycan biosynthesis. In terms of biological role, cell wall formation. Catalyzes the transfer of a GlcNAc subunit on undecaprenyl-pyrophosphoryl-MurNAc-pentapeptide (lipid intermediate I) to form undecaprenyl-pyrophosphoryl-MurNAc-(pentapeptide)GlcNAc (lipid intermediate II). The sequence is that of UDP-N-acetylglucosamine--N-acetylmuramyl-(pentapeptide) pyrophosphoryl-undecaprenol N-acetylglucosamine transferase from Lactobacillus delbrueckii subsp. bulgaricus (strain ATCC 11842 / DSM 20081 / BCRC 10696 / JCM 1002 / NBRC 13953 / NCIMB 11778 / NCTC 12712 / WDCM 00102 / Lb 14).